Consider the following 250-residue polypeptide: tRNA pseudouridine synthase A (250 aa).

Catalysis depends on aspartate 52, which acts as the Nucleophile. Tyrosine 110 is a substrate binding site.

It belongs to the tRNA pseudouridine synthase TruA family. Homodimer.

It catalyses the reaction uridine(38/39/40) in tRNA = pseudouridine(38/39/40) in tRNA. In terms of biological role, formation of pseudouridine at positions 38, 39 and 40 in the anticodon stem and loop of transfer RNAs. The protein is tRNA pseudouridine synthase A of Citrifermentans bemidjiense (strain ATCC BAA-1014 / DSM 16622 / JCM 12645 / Bem) (Geobacter bemidjiensis).